A 558-amino-acid polypeptide reads, in one-letter code: Mitochondrial nucleoid-associated protein 1 (558 aa).

Over 1–527 the chain is Extracellular; that stretch reads MGAAEPRMEV…VQCNTTIKKS (527 aa). 3 disordered regions span residues 29–88, 130–205, and 222–269; these read KMRG…SWTA, LQRV…KLGT, and LSDR…KTQK. Over residues 36–45 the composition is skewed to polar residues; it reads SADQNVSQSK. Positions 51–81 are enriched in basic and acidic residues; that stretch reads QKEKSPTRDLTRAKEKELEVDRPKRAVKAET. Composition is skewed to polar residues over residues 131–144 and 187–197; these read QRVT…SDAT and SSTQPHANPAT. Residues 528 to 548 form a helical membrane-spanning segment; sequence GVGGLTMLFAGYFILCCNWSF. The Cytoplasmic portion of the chain corresponds to 549–558; that stretch reads KHLKLQHWRK.

The protein resides in the mitochondrion inner membrane. Its subcellular location is the mitochondrion matrix. It is found in the mitochondrion nucleoid. Its function is as follows. Critical regulator of mitochondrial DNA (mtDNA) abundance. Binds dsDNA throughout the mitochondrial genome without sequence specificity and controls mtDNA copy number by promoting its replication. Also plays important roles in mitochondrial metabolism and cell proliferation. The polypeptide is Mitochondrial nucleoid-associated protein 1 (Mus musculus (Mouse)).